Here is a 123-residue protein sequence, read N- to C-terminus: SGSCTTKTCWTMLPNFRSVGDVLKEKYERTLQVEPVKAKRTRRPTFLKVKDSENYRKPRLSHLVFLHRSPNYCEFDENNGSMGTVGRRCNRTSTSTDSCDLMCCGRGYNTHQYTKIWQCNCKF.

Serine 1 carries the O-palmitoleoyl serine; by PORCN lipid modification. 2 N-linked (GlcNAc...) asparagine glycosylation sites follow: asparagine 79 and asparagine 90. A disulfide bridge links cysteine 89 with cysteine 104.

This sequence belongs to the Wnt family. Palmitoleoylation is required for efficient binding to frizzled receptors. Depalmitoleoylation leads to Wnt signaling pathway inhibition.

The protein localises to the secreted. It localises to the extracellular space. Its subcellular location is the extracellular matrix. In terms of biological role, ligand for members of the frizzled family of seven transmembrane receptors. Probable developmental protein. May be a signaling molecule which affects the development of discrete regions of tissues. Is likely to signal over only few cell diameters. In Strongylocentrotus purpuratus (Purple sea urchin), this protein is Protein Wnt-7 (WNT-7).